The primary structure comprises 408 residues: LL-diaminopimelate aminotransferase (408 aa).

Substrate-binding residues include Y15 and G42. Residues Y72, 108–109, Y132, N187, Y218, and 246–248 each bind pyridoxal 5'-phosphate; these read SK and SFS. Positions 109, 132, and 187 each coordinate substrate. K249 carries the N6-(pyridoxal phosphate)lysine modification. Pyridoxal 5'-phosphate is bound by residues R257 and N292. Residues N292 and R388 each coordinate substrate.

It belongs to the class-I pyridoxal-phosphate-dependent aminotransferase family. LL-diaminopimelate aminotransferase subfamily. In terms of assembly, homodimer. Pyridoxal 5'-phosphate serves as cofactor.

It carries out the reaction (2S,6S)-2,6-diaminopimelate + 2-oxoglutarate = (S)-2,3,4,5-tetrahydrodipicolinate + L-glutamate + H2O + H(+). The protein operates within amino-acid biosynthesis; L-lysine biosynthesis via DAP pathway; LL-2,6-diaminopimelate from (S)-tetrahydrodipicolinate (aminotransferase route): step 1/1. Its function is as follows. Involved in the synthesis of meso-diaminopimelate (m-DAP or DL-DAP), required for both lysine and peptidoglycan biosynthesis. Catalyzes the direct conversion of tetrahydrodipicolinate to LL-diaminopimelate. Is also able to catalyze the reverse reaction in vitro, i.e. the transamination of LL-diaminopimelate with 2-oxoglutarate to produce tetrahydrodipicolinate and glutamate. Cannot use m-DAP, lysine or ornithine as the amino-group donor, when using 2-oxoglutarate as the amino-group acceptor. Cannot use pyruvate, indole 3-pyruvate, oxaloacetate or phenyl pyruvate as the amino-group acceptor, when using LL-DAP as the amino-group donor. This Leptospira interrogans serogroup Icterohaemorrhagiae serovar copenhageni (strain Fiocruz L1-130) protein is LL-diaminopimelate aminotransferase.